The chain runs to 207 residues: Probable RNA 2'-phosphotransferase (207 aa).

It belongs to the KptA/TPT1 family.

Removes the 2'-phosphate from RNA via an intermediate in which the phosphate is ADP-ribosylated by NAD followed by a presumed transesterification to release the RNA and generate ADP-ribose 1''-2''-cyclic phosphate (APPR&gt;P). May function as an ADP-ribosylase. This is Probable RNA 2'-phosphotransferase from Methanosarcina acetivorans (strain ATCC 35395 / DSM 2834 / JCM 12185 / C2A).